Consider the following 654-residue polypeptide: Beta-mannosyltransferase 2 (654 aa).

Over 1-37 (MLAWLRHRIRSYNTSTYSSILPSASFGKVYKIGTKLN) the chain is Cytoplasmic. The chain crosses the membrane as a helical span at residues 38 to 58 (FTLLALCLLLACSVFFNYFYL). Over 59–654 (ADNNGLDIDT…ANGNGKGSSS (596 aa)) the chain is Extracellular.

The protein belongs to the BMT family.

It is found in the membrane. Beta-mannosyltransferase involved in cell wall biosynthesis. Required for the addition of beta-mannose to the acid-labile fraction of cell wall phosphopeptidomannan. The protein is Beta-mannosyltransferase 2 (RHD1) of Candida albicans (strain SC5314 / ATCC MYA-2876) (Yeast).